The sequence spans 529 residues: Aldehyde dehydrogenase 1 (529 aa).

251–256 (GSTYVG) lines the NAD(+) pocket. Catalysis depends on residues Glu273 and Cys307.

Belongs to the aldehyde dehydrogenase family.

It carries out the reaction an aldehyde + NAD(+) + H2O = a carboxylate + NADH + 2 H(+). This is Aldehyde dehydrogenase 1 from Entamoeba histolytica (strain ATCC 30459 / HM-1:IMSS / ABRM).